The following is a 94-amino-acid chain: Phosphoribosyl-ATP pyrophosphatase (94 aa).

This sequence belongs to the PRA-PH family.

Its subcellular location is the cytoplasm. It catalyses the reaction 1-(5-phospho-beta-D-ribosyl)-ATP + H2O = 1-(5-phospho-beta-D-ribosyl)-5'-AMP + diphosphate + H(+). Its pathway is amino-acid biosynthesis; L-histidine biosynthesis; L-histidine from 5-phospho-alpha-D-ribose 1-diphosphate: step 2/9. The sequence is that of Phosphoribosyl-ATP pyrophosphatase from Saccharolobus islandicus (strain Y.N.15.51 / Yellowstone #2) (Sulfolobus islandicus).